The chain runs to 201 residues: Fimbrial protein FimX (201 aa).

The signal sequence occupies residues 1 to 21 (MQAKTFLLGAALAGVALAAHA). A disulfide bridge links C37 with C79.

The protein belongs to the fimbrial protein family.

It is found in the fimbrium. Functionally, bordetella pertussis is the causative agent of whooping cough. An essential step in the disease process is the attachment of the bacteria to the ciliated epithelium of the respiratory tract, enabling the organism to resist normal host-clearance mechanisms. It is unclear which bacterial cell surface component are responsible for adherence but the fimbriae of B.pertussis are prime candidates for being involved in this process. The polypeptide is Fimbrial protein FimX (fimX) (Bordetella pertussis (strain Tohama I / ATCC BAA-589 / NCTC 13251)).